Consider the following 357-residue polypeptide: Arginine kinase (357 aa).

A2 is modified (N-acetylalanine). One can recognise a Phosphagen kinase N-terminal domain in the interval 9–91; the sequence is KLDEGFKKLE…FDPIIEDYHK (83 aa). 64–68 lines the L-arginine pocket; it reads GVGVY. The Phosphagen kinase C-terminal domain maps to 119–356; the sequence is FVISTRVRCG…LELIKIEKEM (238 aa). ATP is bound by residues 122-126 and H185; that span reads STRVR. E225 is an L-arginine binding site. ATP is bound at residue R229. C271 provides a ligand contact to L-arginine. Residues 280–284 and 309–314 contribute to the ATP site; these read RASVH and RGTRGE. E314 lines the L-arginine pocket.

Belongs to the ATP:guanido phosphotransferase family.

The catalysed reaction is L-arginine + ATP = N(omega)-phospho-L-arginine + ADP + H(+). The chain is Arginine kinase from Eriocheir sinensis (Chinese mitten crab).